Reading from the N-terminus, the 271-residue chain is Transmembrane protein 150A (271 aa).

At 1-3 (MTG) the chain is on the cytoplasmic side. The helical transmembrane segment at 4 to 24 (WIVLPISLTAFSIPGIWIVYA) threads the bilayer. Residues 25–75 (MAVMNHHVCPVENWTYNLTCTDDNTKAGTPKSCCTLEDVPLISKCGTYPPE) are Extracellular-facing. N-linked (GlcNAc...) asparagine glycans are attached at residues Asn-37 and Asn-41. A helical transmembrane segment spans residues 76–96 (SCLFSLIGNVGAFMVVIICLL). The Cytoplasmic portion of the chain corresponds to 97–108 (RYSQVIEISQRS). The chain crosses the membrane as a helical span at residues 109 to 129 (WLNTTALIAGCTNAAGLVMVG). Residues 130-140 (NFQVDYAKSLH) are Extracellular-facing. A helical transmembrane segment spans residues 141–161 (YIGAGVAFPAGLLFVCLSSIL). Residues 162–182 (SYQLAASALDYWLGHLRVSLT) lie on the Cytoplasmic side of the membrane. A helical membrane pass occupies residues 183 to 203 (IVALISLVLTGVFFIQESFLM). Over 204-205 (QH) the chain is Extracellular. A helical membrane pass occupies residues 206–226 (LVAICEWIFVLDILVFYGTFA). The Cytoplasmic segment spans residues 227–271 (YEFGSVSTDTMMAALQSSAARSCKSPGSSSTSTQLHCNAERIAMI).

This sequence belongs to the DRAM/TMEM150 family.

The protein resides in the cell membrane. Functionally, regulates localization of phosphatidylinositol 4-kinase (PI4K) to the plasma membrane. The sequence is that of Transmembrane protein 150A (tmem150a) from Xenopus laevis (African clawed frog).